Here is a 209-residue protein sequence, read N- to C-terminus: Probable GTP-binding protein EngB (209 aa).

The EngB-type G domain occupies 22–198 (TPLEIAFVGR…NRTVGSWFDA (177 aa)). Mg(2+) contacts are provided by Ser37 and Thr59.

This sequence belongs to the TRAFAC class TrmE-Era-EngA-EngB-Septin-like GTPase superfamily. EngB GTPase family. The cofactor is Mg(2+).

In terms of biological role, necessary for normal cell division and for the maintenance of normal septation. The polypeptide is Probable GTP-binding protein EngB (Neisseria gonorrhoeae (strain ATCC 700825 / FA 1090)).